A 153-amino-acid polypeptide reads, in one-letter code: Transcriptional repressor NrdR (153 aa).

The segment at 3-34 (CPFCHNQDTRVIDSRAAEEGTAIRRRRSCPAC) is a zinc-finger region. One can recognise an ATP-cone domain in the interval 46–136 (LMVTKRSGAT…VYRSFESLED (91 aa)).

Belongs to the NrdR family. It depends on Zn(2+) as a cofactor.

In terms of biological role, negatively regulates transcription of bacterial ribonucleotide reductase nrd genes and operons by binding to NrdR-boxes. This Thermobifida fusca (strain YX) protein is Transcriptional repressor NrdR.